A 275-amino-acid polypeptide reads, in one-letter code: Large ribosomal subunit protein uL2c (275 aa).

Residues 225–256 (AMNAVDHPHGGGEGRSPIGRSQPSTPWGRPAL) are disordered.

It belongs to the universal ribosomal protein uL2 family. In terms of assembly, part of the 50S ribosomal subunit.

Its subcellular location is the plastid. The protein localises to the chloroplast. This chain is Large ribosomal subunit protein uL2c (rpl2), found in Cyanidium caldarium (Red alga).